We begin with the raw amino-acid sequence, 558 residues long: Coiled-coil domain-containing protein 63 (558 aa).

Positions M1–V26 are disordered. A compositionally biased stretch (basic and acidic residues) spans K9–V26. Coiled-coil stretches lie at residues N48–K289 and V339–L416. The disordered stretch occupies residues H531–V558. The span at A533–K551 shows a compositional bias: basic and acidic residues.

Its function is as follows. Plays a role in spermiogenesis. Involved in the elongation of flagella and the formation of sperm heads. This is Coiled-coil domain-containing protein 63 from Bos taurus (Bovine).